Consider the following 78-residue polypeptide: Acyl carrier protein (78 aa).

Residues 2-77 form the Carrier domain; the sequence is STIEERVKKI…AAIDYVNAHQ (76 aa). O-(pantetheine 4'-phosphoryl)serine is present on Ser-37.

It belongs to the acyl carrier protein (ACP) family. Post-translationally, 4'-phosphopantetheine is transferred from CoA to a specific serine of apo-ACP by AcpS. This modification is essential for activity because fatty acids are bound in thioester linkage to the sulfhydryl of the prosthetic group.

Its subcellular location is the cytoplasm. Its pathway is lipid metabolism; fatty acid biosynthesis. Its function is as follows. Carrier of the growing fatty acid chain in fatty acid biosynthesis. This Pseudomonas entomophila (strain L48) protein is Acyl carrier protein.